Consider the following 190-residue polypeptide: Carbonic anhydrase 2 (190 aa).

It belongs to the beta-class carbonic anhydrase family. In terms of assembly, homohexamer.

Its subcellular location is the cytoplasm. It catalyses the reaction hydrogencarbonate + H(+) = CO2 + H2O. In terms of biological role, reversible hydration of carbon dioxide. This chain is Carbonic anhydrase 2, found in Flaveria linearis (Narrowleaf yellowtops).